The following is a 43-amino-acid chain: Photosystem I reaction center subunit IX (43 aa).

Residues 7–27 form a helical membrane-spanning segment; the sequence is YLSVAPVLSALWFGALAGLLI.

It belongs to the PsaJ family.

The protein localises to the plastid. It localises to the chloroplast thylakoid membrane. Its function is as follows. May help in the organization of the PsaE and PsaF subunits. This Oenothera argillicola (Appalachian evening primrose) protein is Photosystem I reaction center subunit IX.